The sequence spans 158 residues: NAD(P)H-quinone oxidoreductase subunit J, chloroplastic (158 aa).

Belongs to the complex I 30 kDa subunit family. NDH is composed of at least 16 different subunits, 5 of which are encoded in the nucleus.

The protein resides in the plastid. The protein localises to the chloroplast thylakoid membrane. It carries out the reaction a plastoquinone + NADH + (n+1) H(+)(in) = a plastoquinol + NAD(+) + n H(+)(out). The enzyme catalyses a plastoquinone + NADPH + (n+1) H(+)(in) = a plastoquinol + NADP(+) + n H(+)(out). Its function is as follows. NDH shuttles electrons from NAD(P)H:plastoquinone, via FMN and iron-sulfur (Fe-S) centers, to quinones in the photosynthetic chain and possibly in a chloroplast respiratory chain. The immediate electron acceptor for the enzyme in this species is believed to be plastoquinone. Couples the redox reaction to proton translocation, and thus conserves the redox energy in a proton gradient. The protein is NAD(P)H-quinone oxidoreductase subunit J, chloroplastic of Gossypium barbadense (Sea Island cotton).